We begin with the raw amino-acid sequence, 140 residues long: Putative pre-16S rRNA nuclease (140 aa).

This sequence belongs to the YqgF nuclease family.

It localises to the cytoplasm. In terms of biological role, could be a nuclease involved in processing of the 5'-end of pre-16S rRNA. This Vibrio vulnificus (strain CMCP6) protein is Putative pre-16S rRNA nuclease.